The primary structure comprises 186 residues: FMN reductase (NADPH) (186 aa).

The protein belongs to the SsuE family.

The enzyme catalyses FMNH2 + NADP(+) = FMN + NADPH + 2 H(+). In Pseudomonas aeruginosa (strain ATCC 15692 / DSM 22644 / CIP 104116 / JCM 14847 / LMG 12228 / 1C / PRS 101 / PAO1), this protein is FMN reductase (NADPH) (msuE).